The following is a 314-amino-acid chain: tRNA dimethylallyltransferase (314 aa).

9–16 (GPTAVGKT) provides a ligand contact to ATP. Substrate is bound at residue 11–16 (TAVGKT). An interaction with substrate tRNA region spans residues 34–37 (DSVQ).

Belongs to the IPP transferase family. Monomer. Mg(2+) is required as a cofactor.

The enzyme catalyses adenosine(37) in tRNA + dimethylallyl diphosphate = N(6)-dimethylallyladenosine(37) in tRNA + diphosphate. In terms of biological role, catalyzes the transfer of a dimethylallyl group onto the adenine at position 37 in tRNAs that read codons beginning with uridine, leading to the formation of N6-(dimethylallyl)adenosine (i(6)A). In Desulfitobacterium hafniense (strain Y51), this protein is tRNA dimethylallyltransferase.